The chain runs to 357 residues: NADH-quinone oxidoreductase subunit H (357 aa).

Helical transmembrane passes span 20–40 (WLVV…ILCV), 92–112 (ILFI…WAVV), 127–147 (LLYV…AGWA), 165–185 (VSYE…SGSL), 206–226 (FLSW…ISAV), 268–288 (ILLS…PIDI), 294–314 (IPGW…FIWF), and 329–349 (LGWK…AIWM).

It belongs to the complex I subunit 1 family. In terms of assembly, NDH-1 is composed of 14 different subunits. Subunits NuoA, H, J, K, L, M, N constitute the membrane sector of the complex.

Its subcellular location is the cell inner membrane. The catalysed reaction is a quinone + NADH + 5 H(+)(in) = a quinol + NAD(+) + 4 H(+)(out). In terms of biological role, NDH-1 shuttles electrons from NADH, via FMN and iron-sulfur (Fe-S) centers, to quinones in the respiratory chain. The immediate electron acceptor for the enzyme in this species is believed to be ubiquinone. Couples the redox reaction to proton translocation (for every two electrons transferred, four hydrogen ions are translocated across the cytoplasmic membrane), and thus conserves the redox energy in a proton gradient. This subunit may bind ubiquinone. The sequence is that of NADH-quinone oxidoreductase subunit H from Bordetella avium (strain 197N).